Consider the following 378-residue polypeptide: SPbeta prophage-derived uncharacterized protein YorJ (378 aa).

The sequence is that of SPbeta prophage-derived uncharacterized protein YorJ (yorJ) from Bacillus subtilis (strain 168).